We begin with the raw amino-acid sequence, 309 residues long: NAD kinase (309 aa).

Aspartate 89 serves as the catalytic Proton acceptor. Residues 89 to 90, 163 to 164, histidine 174, arginine 191, aspartate 193, and 204 to 209 each bind NAD(+); these read DG, NE, and TAYALS.

Belongs to the NAD kinase family. It depends on a divalent metal cation as a cofactor.

It localises to the cytoplasm. It catalyses the reaction NAD(+) + ATP = ADP + NADP(+) + H(+). Functionally, involved in the regulation of the intracellular balance of NAD and NADP, and is a key enzyme in the biosynthesis of NADP. Catalyzes specifically the phosphorylation on 2'-hydroxyl of the adenosine moiety of NAD to yield NADP. The chain is NAD kinase from Shewanella sp. (strain W3-18-1).